Consider the following 232-residue polypeptide: Small ribosomal subunit protein uS3 (232 aa).

In terms of domain architecture, KH type-2 spans I39 to R107.

Belongs to the universal ribosomal protein uS3 family. As to quaternary structure, part of the 30S ribosomal subunit. Forms a tight complex with proteins S10 and S14.

In terms of biological role, binds the lower part of the 30S subunit head. Binds mRNA in the 70S ribosome, positioning it for translation. The polypeptide is Small ribosomal subunit protein uS3 (Rhodopseudomonas palustris (strain BisB18)).